A 244-amino-acid polypeptide reads, in one-letter code: Zinc import ATP-binding protein ZnuC 2 (244 aa).

The 216-residue stretch at 3–218 folds into the ABC transporter domain; the sequence is IGCASLTIQL…PEYLALFGID (216 aa). Position 35 to 42 (35 to 42) interacts with ATP; it reads GPNGSGKT.

It belongs to the ABC transporter superfamily. Zinc importer (TC 3.A.1.15.5) family. In terms of assembly, the complex is composed of two ATP-binding proteins (ZnuC), two transmembrane proteins (ZnuB) and a solute-binding protein (ZnuA).

The protein localises to the cell inner membrane. It carries out the reaction Zn(2+)(out) + ATP(in) + H2O(in) = Zn(2+)(in) + ADP(in) + phosphate(in) + H(+)(in). In terms of biological role, part of the ABC transporter complex ZnuABC involved in zinc import. Responsible for energy coupling to the transport system. This is Zinc import ATP-binding protein ZnuC 2 from Hahella chejuensis (strain KCTC 2396).